A 160-amino-acid chain; its full sequence is MVPSAGQLALFALGIVLAACQALENSTSPLSADPPVAAAVVSHFNDCPDSHTQFCFHGTCRFLVQEDKPACVCHSGYVGARCEHADLLAVVAASQKKQAITALVVVSIVALAVLIITCVLIHCCQVRKHCEWCRALICRHEKPSALLKGRTACCHSETVV.

Positions 1–23 (MVPSAGQLALFALGIVLAACQAL) are cleaved as a signal peptide. Residues 24–39 (ENSTSPLSADPPVAAA) constitute a propeptide, removed in mature form. At 24-98 (ENSTSPLSAD…AVVAASQKKQ (75 aa)) the chain is on the extracellular side. N-linked (GlcNAc...) asparagine glycosylation occurs at N25. The EGF-like domain maps to 43-83 (HFNDCPDSHTQFCFHGTCRFLVQEDKPACVCHSGYVGARCE). Cystine bridges form between C47–C60, C55–C71, and C73–C82. A propeptide spans 90-160 (VVAASQKKQA…TACCHSETVV (71 aa)) (removed in mature form). The chain crosses the membrane as a helical span at residues 99-124 (AITALVVVSIVALAVLIITCVLIHCC). The Cytoplasmic portion of the chain corresponds to 125–160 (QVRKHCEWCRALICRHEKPSALLKGRTACCHSETVV). S-palmitoyl cysteine attachment occurs at residues C153 and C154.

Interacts with the PDZ domains of MAGI3, SDCBP and SNTA1. The interaction with SDCBP, is required for the targeting to the cell surface. In the endoplasmic reticulum, in its immature form (i.e. with a prosegment and lacking full N-glycosylation), interacts with CNIH. In the Golgi apparatus, may form a complex with CNIH and GORASP2. Interacts (via cytoplasmic C-terminal domain) with NKD2. Isoform 1, isoform 3 and isoform 4 are expressed in keratinocytes and tumor-derived cell lines.

It localises to the secreted. Its subcellular location is the extracellular space. It is found in the cell membrane. In terms of biological role, TGF alpha is a mitogenic polypeptide that is able to bind to the EGF receptor/EGFR and to act synergistically with TGF beta to promote anchorage-independent cell proliferation in soft agar. The chain is Protransforming growth factor alpha (TGFA) from Homo sapiens (Human).